The primary structure comprises 470 residues: UDP-N-acetylmuramoylalanine--D-glutamate ligase (470 aa).

120–126 contributes to the ATP binding site; that stretch reads GSNGKTT.

It belongs to the MurCDEF family.

Its subcellular location is the cytoplasm. The catalysed reaction is UDP-N-acetyl-alpha-D-muramoyl-L-alanine + D-glutamate + ATP = UDP-N-acetyl-alpha-D-muramoyl-L-alanyl-D-glutamate + ADP + phosphate + H(+). Its pathway is cell wall biogenesis; peptidoglycan biosynthesis. In terms of biological role, cell wall formation. Catalyzes the addition of glutamate to the nucleotide precursor UDP-N-acetylmuramoyl-L-alanine (UMA). This Nitrosomonas eutropha (strain DSM 101675 / C91 / Nm57) protein is UDP-N-acetylmuramoylalanine--D-glutamate ligase.